The sequence spans 497 residues: tRNA-2-methylthio-N(6)-dimethylallyladenosine synthase (497 aa).

Positions 1-10 (MTLLDSDSRQ) are enriched in basic and acidic residues. Residues 1 to 26 (MTLLDSDSRQSAEVLPAAGPAPDRPR) are disordered. Residues 26-142 (RTYQVRTFGC…LPVLLERARI (117 aa)) form the MTTase N-terminal domain. Residues C35, C71, C105, C179, C183, and C186 each contribute to the [4Fe-4S] cluster site. The region spanning 165–395 (RESVYAAWVA…VALVEQIALE (231 aa)) is the Radical SAM core domain. The region spanning 398–464 (QAQVGRVVEV…PHCLIADQVL (67 aa)) is the TRAM domain.

The protein belongs to the methylthiotransferase family. MiaB subfamily. Monomer. [4Fe-4S] cluster serves as cofactor.

The protein resides in the cytoplasm. It catalyses the reaction N(6)-dimethylallyladenosine(37) in tRNA + (sulfur carrier)-SH + AH2 + 2 S-adenosyl-L-methionine = 2-methylsulfanyl-N(6)-dimethylallyladenosine(37) in tRNA + (sulfur carrier)-H + 5'-deoxyadenosine + L-methionine + A + S-adenosyl-L-homocysteine + 2 H(+). In terms of biological role, catalyzes the methylthiolation of N6-(dimethylallyl)adenosine (i(6)A), leading to the formation of 2-methylthio-N6-(dimethylallyl)adenosine (ms(2)i(6)A) at position 37 in tRNAs that read codons beginning with uridine. This chain is tRNA-2-methylthio-N(6)-dimethylallyladenosine synthase, found in Acidothermus cellulolyticus (strain ATCC 43068 / DSM 8971 / 11B).